We begin with the raw amino-acid sequence, 157 residues long: Peptide methionine sulfoxide reductase MsrA (157 aa).

Cysteine 10 is a catalytic residue.

Belongs to the MsrA Met sulfoxide reductase family.

The enzyme catalyses L-methionyl-[protein] + [thioredoxin]-disulfide + H2O = L-methionyl-(S)-S-oxide-[protein] + [thioredoxin]-dithiol. The catalysed reaction is [thioredoxin]-disulfide + L-methionine + H2O = L-methionine (S)-S-oxide + [thioredoxin]-dithiol. Has an important function as a repair enzyme for proteins that have been inactivated by oxidation. Catalyzes the reversible oxidation-reduction of methionine sulfoxide in proteins to methionine. The sequence is that of Peptide methionine sulfoxide reductase MsrA from Clostridium botulinum (strain Hall / ATCC 3502 / NCTC 13319 / Type A).